A 316-amino-acid polypeptide reads, in one-letter code: UPF0725 protein At1g02770 (316 aa).

This sequence belongs to the UPF0725 (EMB2204) family.

The chain is UPF0725 protein At1g02770 from Arabidopsis thaliana (Mouse-ear cress).